Reading from the N-terminus, the 80-residue chain is DNA-directed RNA polymerase subunit Rpo5 (80 aa).

Belongs to the archaeal Rpo5/eukaryotic RPB5 RNA polymerase subunit family. In terms of assembly, part of the RNA polymerase complex.

The protein resides in the cytoplasm. The catalysed reaction is RNA(n) + a ribonucleoside 5'-triphosphate = RNA(n+1) + diphosphate. Functionally, DNA-dependent RNA polymerase (RNAP) catalyzes the transcription of DNA into RNA using the four ribonucleoside triphosphates as substrates. In Thermofilum pendens (strain DSM 2475 / Hrk 5), this protein is DNA-directed RNA polymerase subunit Rpo5.